The chain runs to 213 residues: V-type ATP synthase subunit D (213 aa).

Belongs to the V-ATPase D subunit family.

Functionally, produces ATP from ADP in the presence of a proton gradient across the membrane. The sequence is that of V-type ATP synthase subunit D from Clostridium botulinum (strain Alaska E43 / Type E3).